We begin with the raw amino-acid sequence, 325 residues long: MSWFTPELIEILISVLKAVVILLVVVTCGAFMSFGERRLLGLFQNRYGPNRVGWGGSLQLVADMIKMFFKEDWVPRFSDRAIFTLAPVIAFTSLLLSFAIVPVSPTWAVADLNIGILFFLMMAGLAVYAVLFAGWSSNNKYSLLGAMRASAQTLSYEVFLGLSLMGVVAQAGSFNMQDIVNSQEHVWNVIPQFFGFVTFAIAGVAVCHRHPFDQPEAEQELADGYHIEYSGMKFGLFFVGEYIGIVTVSALIVTLFFGGWQGPFLPPFIWFALKTAFFMVMFILIRASLPRPRYDQVMSFGWKVCLPLTLLNLLATAAVILYNAQ.

The next 8 membrane-spanning stretches (helical) occupy residues 11–31, 81–101, 114–134, 154–174, 186–206, 237–257, 265–285, and 304–324; these read ILIS…CGAF, AIFT…FAIV, IGIL…LFAG, LSYE…AGSF, VWNV…GVAV, FFVG…TLFF, LPPF…FILI, and VCLP…LYNA.

Belongs to the complex I subunit 1 family. In terms of assembly, NDH-1 is composed of 13 different subunits. Subunits NuoA, H, J, K, L, M, N constitute the membrane sector of the complex.

It localises to the cell inner membrane. The catalysed reaction is a quinone + NADH + 5 H(+)(in) = a quinol + NAD(+) + 4 H(+)(out). Functionally, NDH-1 shuttles electrons from NADH, via FMN and iron-sulfur (Fe-S) centers, to quinones in the respiratory chain. The immediate electron acceptor for the enzyme in this species is believed to be ubiquinone. Couples the redox reaction to proton translocation (for every two electrons transferred, four hydrogen ions are translocated across the cytoplasmic membrane), and thus conserves the redox energy in a proton gradient. This subunit may bind ubiquinone. In Yersinia enterocolitica serotype O:8 / biotype 1B (strain NCTC 13174 / 8081), this protein is NADH-quinone oxidoreductase subunit H.